The following is an 87-amino-acid chain: Small ribosomal subunit protein eS21 (87 aa).

The protein belongs to the eukaryotic ribosomal protein eS21 family. As to quaternary structure, component of the small ribosomal subunit (SSU). Mature N.crassa ribosomes consist of a small (40S) and a large (60S) subunit. The 40S small subunit contains 1 molecule of ribosomal RNA (18S rRNA) and at least 32 different proteins. The large 60S subunit contains 3 rRNA molecules (26S, 5.8S and 5S rRNA) and at least 42 different proteins.

The protein localises to the cytoplasm. In terms of biological role, component of the ribosome, a large ribonucleoprotein complex responsible for the synthesis of proteins in the cell. The small ribosomal subunit (SSU) binds messenger RNAs (mRNAs) and translates the encoded message by selecting cognate aminoacyl-transfer RNA (tRNA) molecules. The large subunit (LSU) contains the ribosomal catalytic site termed the peptidyl transferase center (PTC), which catalyzes the formation of peptide bonds, thereby polymerizing the amino acids delivered by tRNAs into a polypeptide chain. The nascent polypeptides leave the ribosome through a tunnel in the LSU and interact with protein factors that function in enzymatic processing, targeting, and the membrane insertion of nascent chains at the exit of the ribosomal tunnel. The chain is Small ribosomal subunit protein eS21 (crp-7) from Neurospora crassa (strain ATCC 24698 / 74-OR23-1A / CBS 708.71 / DSM 1257 / FGSC 987).